The chain runs to 956 residues: Run domain Beclin-1-interacting and cysteine-rich domain-containing protein (956 aa).

An RUN domain is found at 49 to 190 (WSKYGGLERL…PRLLAQIDAS (142 aa)). An interaction with PIK3C3 region spans residues 50–181 (SKYGGLERLC…CLEAVEQNNP (132 aa)). Phosphoserine is present on Ser-198. Residues 205–437 (SQSLTALPGS…ITIIVEDPIA (233 aa)) form an interaction with YWHAB region. Low complexity predominate over residues 233 to 242 (SLQSMPQSSH). The segment at 233-423 (SLQSMPQSSH…TNIASRGAAG (191 aa)) is disordered. 2 positions are modified to phosphoserine: Ser-250 and Ser-268. The span at 270 to 319 (AETQTTPAPLPSDSTLAQDSPLTAQEMSDSTLTSPLEASWVSSQNDSPSD) shows a compositional bias: polar residues. An interaction with UVRAG region spans residues 302–585 (TSPLEASWVS…DLEIQDADIR (284 aa)). Positions 339-371 (ASCESHSSNGESSSSHLFSSSSSQKLESAASSL) are enriched in low complexity. A compositionally biased stretch (polar residues) spans 379–395 (QSQAGSVLRRSSFSEGQ). Phosphoserine is present on residues Ser-390, Ser-412, Ser-513, and Ser-547. Positions 490-542 (AIELMKCNMMSQCLEEEEVEEEDSDREIQELKQKIRLRRQQIRTKNLLPAYRE) are interaction with BECN1. Residues 547-566 (SFRVTSSSSQFSSRDSTQLS) show a composition bias toward low complexity. Residues 547 to 579 (SFRVTSSSSQFSSRDSTQLSESGSAEDADDLEI) are disordered. The tract at residues 552-609 (SSSSQFSSRDSTQLSESGSAEDADDLEIQDADIRRSAVSNGKSSFSQNLSHCFLHSTS) is interaction with CYBA. Residues 570–579 (SAEDADDLEI) are compositionally biased toward acidic residues. Position 655 is a phosphoserine (Ser-655). The tract at residues 656–744 (PDDGQHADIY…HENAQMVVPS (89 aa)) is interaction with CARD9. The tract at residues 705-956 (CAGCGIRTDP…ALEATVLETT (252 aa)) is interaction with Rab7.

In terms of assembly, associates with PI3K (PI3KC3/PI3K-III/class III phosphatidylinositol 3-kinase) complex II (PI3KC3-C2) in which the core composed of the catalytic subunit PIK3C3, the regulatory subunit PIK3R4 and BECN1 is associated with UVRAG; in the complex interacts directly with PI3KC3 and UVRAG. Interacts with Rab7 (RAB7A or RAB7B) (GTP-bound form); Rab7 and UVRAG compete for RUBCN binding; can interact simultaneously with Rab7 and the PI3K complex. Interacts with CYBA and CYBB; indicative for the association with the CYBA:CYBB NADPH oxidase heterodimer. Interacts with NOX4 and probably associates with the CYBA:NOX4 complex. Interacts with YWHAB and CARD9 in a competitive and stimulation-dependent manner; RUBCN exchanges interaction from YWHAB to CARD9 upon stimulation with beta-1,3-glucan.

The protein localises to the late endosome. It localises to the lysosome. The protein resides in the early endosome. Its function is as follows. Inhibits PIK3C3 activity; under basal conditions negatively regulates PI3K complex II (PI3KC3-C2) function in autophagy. Negatively regulates endosome maturation and degradative endocytic trafficking and impairs autophagosome maturation process. Can sequester UVRAG from association with a class C Vps complex (possibly the HOPS complex) and negatively regulates Rab7 activation. Involved in regulation of pathogen-specific host defense of activated macrophages. Following bacterial infection promotes NADH oxidase activity by association with CYBA thereby affecting TLR2 signaling and probably other TLR-NOX pathways. Stabilizes the CYBA:CYBB NADPH oxidase heterodimer, increases its association with TLR2 and its phagosome trafficking to induce antimicrobial burst of ROS and production of inflammatory cytokines. Following fungal or viral infection (implicating CLEC7A (dectin-1)-mediated myeloid cell activation or RIGI-dependent sensing of RNA viruses) negatively regulates pro-inflammatory cytokine production by association with CARD9 and sequestering it from signaling complexes. The chain is Run domain Beclin-1-interacting and cysteine-rich domain-containing protein from Mus musculus (Mouse).